We begin with the raw amino-acid sequence, 389 residues long: Succinate--CoA ligase [ADP-forming] subunit beta (389 aa).

The ATP-grasp domain maps to 9–244 (KQLLAEYGIP…KTQEDETEVT (236 aa)). Residues K46, 53–55 (GRG), G102, and E107 contribute to the ATP site. N199 and D213 together coordinate Mg(2+). Residues N264 and 321 to 323 (GIV) contribute to the substrate site.

Belongs to the succinate/malate CoA ligase beta subunit family. Heterotetramer of two alpha and two beta subunits. Mg(2+) serves as cofactor.

The enzyme catalyses succinate + ATP + CoA = succinyl-CoA + ADP + phosphate. The catalysed reaction is GTP + succinate + CoA = succinyl-CoA + GDP + phosphate. It participates in carbohydrate metabolism; tricarboxylic acid cycle; succinate from succinyl-CoA (ligase route): step 1/1. Functionally, succinyl-CoA synthetase functions in the citric acid cycle (TCA), coupling the hydrolysis of succinyl-CoA to the synthesis of either ATP or GTP and thus represents the only step of substrate-level phosphorylation in the TCA. The beta subunit provides nucleotide specificity of the enzyme and binds the substrate succinate, while the binding sites for coenzyme A and phosphate are found in the alpha subunit. In Xanthomonas oryzae pv. oryzae (strain MAFF 311018), this protein is Succinate--CoA ligase [ADP-forming] subunit beta.